The sequence spans 291 residues: Phosphate import ATP-binding protein PstB (291 aa).

The disordered stretch occupies residues 1–21 (MANKQIIDKNDDLQAHTDRND). The ABC transporter domain maps to 45–286 (YSTKNLDLWY…PSDKQTEDYI (242 aa)). ATP is bound at residue 77 to 84 (GPSGCGKS).

This sequence belongs to the ABC transporter superfamily. Phosphate importer (TC 3.A.1.7) family. In terms of assembly, the complex is composed of two ATP-binding proteins (PstB), two transmembrane proteins (PstC and PstA) and a solute-binding protein (PstS).

Its subcellular location is the cell membrane. It catalyses the reaction phosphate(out) + ATP + H2O = ADP + 2 phosphate(in) + H(+). In terms of biological role, part of the ABC transporter complex PstSACB involved in phosphate import. Responsible for energy coupling to the transport system. This chain is Phosphate import ATP-binding protein PstB, found in Staphylococcus saprophyticus subsp. saprophyticus (strain ATCC 15305 / DSM 20229 / NCIMB 8711 / NCTC 7292 / S-41).